We begin with the raw amino-acid sequence, 299 residues long: S-fimbrial protein subunit SfaH (299 aa).

It belongs to the fimbrial protein family.

It localises to the fimbrium. Fimbriae (also called pili), polar filaments radiating from the surface of the bacterium to a length of 0.5-1.5 micrometers and numbering 100-300 per cell, enable bacteria to colonize the epithelium of specific host organs. In terms of biological role, a minor fimbrial subunit. This protein is necessary for full expression of S-specific binding. S-fimbrial adhesins enable pathogenic E.coli causing urinary-tract infections or newborn meningitis to attach to glycoproteins terminating with alpha-sialic acid-(2-3)-beta-Gal. In Escherichia coli O6:K15:H31 (strain 536 / UPEC), this protein is S-fimbrial protein subunit SfaH (sfaH).